A 336-amino-acid chain; its full sequence is DNA repair protein Rad51 homolog (336 aa).

Polar residues predominate over residues 1–10 (MEKLTNVQAQ). Positions 1–20 (MEKLTNVQAQQEEEEEEGPL) are disordered. ATP is bound at residue 124–131 (GEFRCGKT).

Belongs to the RecA family. RAD51 subfamily. As to quaternary structure, interacts with Rrp6; the interaction is required for the recruitment of spn-A to the DNA-damage response foci. In terms of tissue distribution, highly expressed in ovaries.

The protein localises to the nucleus. The protein resides in the cytoplasm. Functionally, plays an important role in homologous strand exchange, a key step in DNA repair through homologous recombination (HR). Binds to single and double-stranded DNA and exhibits DNA-dependent ATPase activity. Underwinds duplex DNA. Spindle genes are required for each of the symmetry-breaking steps that generate polarity during egg axis formation; oocyte positioning at the posterior of the cyst to generate the first AP polarity and inhibition of gurken (grk) signaling to the follicle cell layer to polarize first the AP axis and then DV axis. May have a role in female meiosis. The sequence is that of DNA repair protein Rad51 homolog (spn-A) from Drosophila melanogaster (Fruit fly).